The chain runs to 285 residues: Ret finger protein-like 4A (285 aa).

Residues 11 to 53 form an RING-type; degenerate zinc finger; it reads CYFCFRYLENPVYLNCGYICCFQCLDSLEKSPEGDGVLCPNCS. Residues 78–276 enclose the B30.2/SPRY domain; sequence EPQLNFILTM…ISICPVMNPS (199 aa).

In terms of assembly, interacts with PSMB1, UBE2A and CCNB1.

It is found in the cytoplasm. The protein localises to the nucleus. This chain is Ret finger protein-like 4A (Rfpl4a), found in Rattus norvegicus (Rat).